We begin with the raw amino-acid sequence, 736 residues long: Phosphoribosylformylglycinamidine synthase subunit PurL (736 aa).

His-48 is an active-site residue. Residues Tyr-51 and Lys-90 each coordinate ATP. Glu-92 provides a ligand contact to Mg(2+). Substrate-binding positions include 93–96 (SHNH) and Arg-115. Catalysis depends on His-94, which acts as the Proton acceptor. Asp-116 provides a ligand contact to Mg(2+). Gln-239 contributes to the substrate binding site. Residue Asp-267 participates in Mg(2+) binding. 311 to 313 (ESQ) lines the substrate pocket. ATP contacts are provided by Asp-492 and Gly-529. Asn-530 contributes to the Mg(2+) binding site. Ser-532 contributes to the substrate binding site.

It belongs to the FGAMS family. As to quaternary structure, monomer. Part of the FGAM synthase complex composed of 1 PurL, 1 PurQ and 2 PurS subunits.

The protein resides in the cytoplasm. The enzyme catalyses N(2)-formyl-N(1)-(5-phospho-beta-D-ribosyl)glycinamide + L-glutamine + ATP + H2O = 2-formamido-N(1)-(5-O-phospho-beta-D-ribosyl)acetamidine + L-glutamate + ADP + phosphate + H(+). It functions in the pathway purine metabolism; IMP biosynthesis via de novo pathway; 5-amino-1-(5-phospho-D-ribosyl)imidazole from N(2)-formyl-N(1)-(5-phospho-D-ribosyl)glycinamide: step 1/2. Its function is as follows. Part of the phosphoribosylformylglycinamidine synthase complex involved in the purines biosynthetic pathway. Catalyzes the ATP-dependent conversion of formylglycinamide ribonucleotide (FGAR) and glutamine to yield formylglycinamidine ribonucleotide (FGAM) and glutamate. The FGAM synthase complex is composed of three subunits. PurQ produces an ammonia molecule by converting glutamine to glutamate. PurL transfers the ammonia molecule to FGAR to form FGAM in an ATP-dependent manner. PurS interacts with PurQ and PurL and is thought to assist in the transfer of the ammonia molecule from PurQ to PurL. The sequence is that of Phosphoribosylformylglycinamidine synthase subunit PurL from Bradyrhizobium sp. (strain ORS 278).